A 339-amino-acid polypeptide reads, in one-letter code: uncharacterized protein (339 aa).

The Rhodanese domain maps to 17–111 (VRGEIKCLDV…WEDLSLPQNE (95 aa)).

This is an uncharacterized protein from Schizosaccharomyces pombe (strain 972 / ATCC 24843) (Fission yeast).